The primary structure comprises 141 residues: Small ribosomal subunit protein bS16 (141 aa).

A disordered region spans residues 84–141; the sequence is TRKARSNPEKSKPKAKAQERLEAARMAEEEAAAAAKAAAEAPAEEAPAAEAPAEEAQA. Basic and acidic residues predominate over residues 89-111; that stretch reads SNPEKSKPKAKAQERLEAARMAE. A compositionally biased stretch (low complexity) spans 115–141; that stretch reads AAAAKAAAEAPAEEAPAAEAPAEEAQA.

Belongs to the bacterial ribosomal protein bS16 family.

This chain is Small ribosomal subunit protein bS16, found in Parvibaculum lavamentivorans (strain DS-1 / DSM 13023 / NCIMB 13966).